Consider the following 1379-residue polypeptide: DNA-directed RNA polymerase subunit beta (1379 aa).

This sequence belongs to the RNA polymerase beta chain family. As to quaternary structure, the RNAP catalytic core consists of 2 alpha, 1 beta, 1 beta' and 1 omega subunit. When a sigma factor is associated with the core the holoenzyme is formed, which can initiate transcription.

The catalysed reaction is RNA(n) + a ribonucleoside 5'-triphosphate = RNA(n+1) + diphosphate. Its function is as follows. DNA-dependent RNA polymerase catalyzes the transcription of DNA into RNA using the four ribonucleoside triphosphates as substrates. This Campylobacter fetus subsp. fetus (strain 82-40) protein is DNA-directed RNA polymerase subunit beta.